The chain runs to 126 residues: Fluoride-specific ion channel FluC (126 aa).

4 helical membrane passes run 3 to 23 (FAIL…RFLV), 37 to 57 (IGTL…IACV), 70 to 90 (VIGL…MDNV), and 104 to 124 (NVLL…HWLM). Residues Gly-77 and Thr-80 each contribute to the Na(+) site.

This sequence belongs to the fluoride channel Fluc/FEX (TC 1.A.43) family.

The protein localises to the cell inner membrane. It carries out the reaction fluoride(in) = fluoride(out). Its activity is regulated as follows. Na(+) is not transported, but it plays an essential structural role and its presence is essential for fluoride channel function. Its function is as follows. Fluoride-specific ion channel. Important for reducing fluoride concentration in the cell, thus reducing its toxicity. In Vibrio cholerae serotype O1 (strain ATCC 39541 / Classical Ogawa 395 / O395), this protein is Fluoride-specific ion channel FluC.